Consider the following 235-residue polypeptide: Small ribosomal subunit protein uS3 (235 aa).

The 69-residue stretch at 39 to 107 folds into the KH type-2 domain; sequence IRQYVFKALP…DVSLNIVEIR (69 aa).

The protein belongs to the universal ribosomal protein uS3 family. In terms of assembly, part of the 30S ribosomal subunit. Forms a tight complex with proteins S10 and S14.

Functionally, binds the lower part of the 30S subunit head. Binds mRNA in the 70S ribosome, positioning it for translation. This is Small ribosomal subunit protein uS3 from Sphingopyxis alaskensis (strain DSM 13593 / LMG 18877 / RB2256) (Sphingomonas alaskensis).